The primary structure comprises 247 residues: Ribonuclease PH (247 aa).

Phosphate contacts are provided by residues Arg-87 and 125–127 (GTR).

Belongs to the RNase PH family. Homohexameric ring arranged as a trimer of dimers.

It catalyses the reaction tRNA(n+1) + phosphate = tRNA(n) + a ribonucleoside 5'-diphosphate. Functionally, phosphorolytic 3'-5' exoribonuclease that plays an important role in tRNA 3'-end maturation. Removes nucleotide residues following the 3'-CCA terminus of tRNAs; can also add nucleotides to the ends of RNA molecules by using nucleoside diphosphates as substrates, but this may not be physiologically important. Probably plays a role in initiation of 16S rRNA degradation (leading to ribosome degradation) during starvation. The chain is Ribonuclease PH from Frankia casuarinae (strain DSM 45818 / CECT 9043 / HFP020203 / CcI3).